We begin with the raw amino-acid sequence, 339 residues long: Glucokinase (339 aa).

16-21 (GDIGGT) is an ATP binding site.

The protein belongs to the bacterial glucokinase family.

The protein localises to the cytoplasm. It carries out the reaction D-glucose + ATP = D-glucose 6-phosphate + ADP + H(+). The sequence is that of Glucokinase from Sinorhizobium medicae (strain WSM419) (Ensifer medicae).